Here is a 551-residue protein sequence, read N- to C-terminus: Membrane protein insertase YidC (551 aa).

The helical transmembrane segment at 3–23 (ANHIRILLLVTIAIMFISLMG) threads the bilayer. The span at 33-47 (NTKQQTSATQNNSHY) shows a compositional bias: polar residues. The segment at 33 to 59 (NTKQQTSATQNNSHYDNADSSTNTDVT) is disordered. Residues 50–59 (ADSSTNTDVT) show a composition bias toward low complexity. The next 3 helical transmembrane spans lie at 361–381 (LVGNWGLAIILVTCLIKLIFY), 431–451 (LSGCLPMLIQIPIFISLYWVL), and 504–524 (VMMFLPVIFTFLFASFPSGLV).

Belongs to the OXA1/ALB3/YidC family. Type 1 subfamily. In terms of assembly, interacts with the Sec translocase complex via SecD. Specifically interacts with transmembrane segments of nascent integral membrane proteins during membrane integration.

The protein localises to the cell inner membrane. Required for the insertion and/or proper folding and/or complex formation of integral membrane proteins into the membrane. Involved in integration of membrane proteins that insert both dependently and independently of the Sec translocase complex, as well as at least some lipoproteins. Aids folding of multispanning membrane proteins. The protein is Membrane protein insertase YidC of Francisella tularensis subsp. mediasiatica (strain FSC147).